Here is a 331-residue protein sequence, read N- to C-terminus: L-lactate dehydrogenase A chain (331 aa).

NAD(+) contacts are provided by residues G29–K57 and R98. 3 residues coordinate substrate: R105, N137, and R168. N137 serves as a coordination point for NAD(+). The active-site Proton acceptor is the H192. Substrate is bound at residue T247.

Belongs to the LDH/MDH superfamily. LDH family. Homotetramer.

It localises to the cytoplasm. The catalysed reaction is (S)-lactate + NAD(+) = pyruvate + NADH + H(+). It participates in fermentation; pyruvate fermentation to lactate; (S)-lactate from pyruvate: step 1/1. Its function is as follows. Interconverts simultaneously and stereospecifically pyruvate and lactate with concomitant interconversion of NADH and NAD(+). This Dissostichus eleginoides (Patagonian toothfish) protein is L-lactate dehydrogenase A chain (ldha).